Consider the following 32-residue polypeptide: RTCRCRLGRCSRRESYSGSCNINGRIYSLCCR.

Cystine bridges form between C3–C31, C5–C20, and C10–C30.

The protein resides in the secreted. Functionally, has antibacterial activity against the Gram-negative bacterium E.coli and the Gram-positive bacteria L.monocytogenes and S.aureus. Has antifungal activity against C.albicans. This Papio hamadryas (Hamadryas baboon) protein is Defensin-3.